The following is a 116-amino-acid chain: NADPH-dependent 7-cyano-7-deazaguanine reductase (116 aa).

C31 acts as the Thioimide intermediate in catalysis. The Proton donor role is filled by D38. Substrate contacts are provided by residues 53–55 and 72–73; these read VEL and YE.

Belongs to the GTP cyclohydrolase I family. QueF type 1 subfamily.

It localises to the cytoplasm. The catalysed reaction is 7-aminomethyl-7-carbaguanine + 2 NADP(+) = 7-cyano-7-deazaguanine + 2 NADPH + 3 H(+). The protein operates within tRNA modification; tRNA-queuosine biosynthesis. Functionally, catalyzes the NADPH-dependent reduction of 7-cyano-7-deazaguanine (preQ0) to 7-aminomethyl-7-deazaguanine (preQ1). The polypeptide is NADPH-dependent 7-cyano-7-deazaguanine reductase (Chlorobium phaeovibrioides (strain DSM 265 / 1930) (Prosthecochloris vibrioformis (strain DSM 265))).